The following is a 143-amino-acid chain: Flagellar assembly factor FliW (143 aa).

Belongs to the FliW family. As to quaternary structure, interacts with translational regulator CsrA and flagellin(s).

The protein resides in the cytoplasm. Acts as an anti-CsrA protein, binds CsrA and prevents it from repressing translation of its target genes, one of which is flagellin. Binds to flagellin and participates in the assembly of the flagellum. The sequence is that of Flagellar assembly factor FliW from Bacillus licheniformis (strain ATCC 14580 / DSM 13 / JCM 2505 / CCUG 7422 / NBRC 12200 / NCIMB 9375 / NCTC 10341 / NRRL NRS-1264 / Gibson 46).